The primary structure comprises 259 residues: Protein GrpE (259 aa).

Disordered stretches follow at residues 1–75 (MNSD…KGSD) and 227–259 (GPGPKAVNEEIPDQSASNQELSESVDGPTKDEN). A compositionally biased stretch (low complexity) spans 20–40 (NNPSENFVSSSNSNESVNQVE). Basic and acidic residues predominate over residues 46 to 60 (EVEHQVKNDSVDTAK). A compositionally biased stretch (polar residues) spans 61–73 (EQSSTSCESNIKG).

This sequence belongs to the GrpE family. In terms of assembly, homodimer.

The protein resides in the cytoplasm. Functionally, participates actively in the response to hyperosmotic and heat shock by preventing the aggregation of stress-denatured proteins, in association with DnaK and GrpE. It is the nucleotide exchange factor for DnaK and may function as a thermosensor. Unfolded proteins bind initially to DnaJ; upon interaction with the DnaJ-bound protein, DnaK hydrolyzes its bound ATP, resulting in the formation of a stable complex. GrpE releases ADP from DnaK; ATP binding to DnaK triggers the release of the substrate protein, thus completing the reaction cycle. Several rounds of ATP-dependent interactions between DnaJ, DnaK and GrpE are required for fully efficient folding. This Prochlorococcus marinus (strain NATL1A) protein is Protein GrpE.